Here is a 403-residue protein sequence, read N- to C-terminus: MASWAEPSEPAAQLLCGAPLLEGFEVLDGVDDAEEEDDLSGLPPLEDMGQPTVEEAEQPGALAREFLAATEPEPAPAPAPEEWLDILGNGLLRKKTLVPGPTGSSRPLKGQVVTVHLQMSLENGTRVQEEPELAFTLGDCDVIQALDLSVPLMHVGETAMVTADSKYCYGPQGSRSPYIPPHAALCLEVTLKTAEDGPDLEMLSGQERVALANRKRECGNAHYQRADFVLAANSYDLAIKAITSNAKVDMTCEEEEELLQLKVKCLNNLAASQLKLDHYRAALRSCSQVLEHQPDNIKALFRKGKVLAQQGEYSEAIPILRAALKLEPSNKTIHAELSKLVKKRAAQRSTETALYRKMLGNPSRLPAKCPGKGAWSIPWKWLFGATAVALGGVALSVVIAARN.

Positions 26–54 (VLDGVDDAEEEDDLSGLPPLEDMGQPTVE) are disordered. Positions 28-39 (DGVDDAEEEDDL) are enriched in acidic residues. The 86-residue stretch at 110–195 (GQVVTVHLQM…CLEVTLKTAE (86 aa)) folds into the PPIase FKBP-type domain. One copy of the TPR 1 repeat lies at 212-245 (ANRKRECGNAHYQRADFVLAANSYDLAIKAITSN). Glycyl lysine isopeptide (Lys-Gly) (interchain with G-Cter in ubiquitin) cross-links involve residues lysine 240, lysine 262, lysine 264, and lysine 275. TPR repeat units follow at residues 263 to 296 (VKCL…QPDN) and 297 to 330 (IKAL…EPSN). The residue at position 287 (serine 287) is a Phosphoserine. Glycyl lysine isopeptide (Lys-Gly) (interchain with G-Cter in ubiquitin) cross-links involve residues lysine 298, lysine 305, lysine 325, lysine 331, lysine 339, lysine 342, and lysine 343. The chain crosses the membrane as a helical span at residues 381-401 (WLFGATAVALGGVALSVVIAA).

Homomultimers or heteromultimers (Potential). Forms heterodimer with calmodulin. When activated by calmodulin and calcium, interacts with the BH4 domain of BCL2 and weakly with BCLX isoform Bcl-X(L). Does not bind and inhibit calcineurin. Interacts with ZFYVE27; may negatively regulate ZFYVE27 phosphorylation. Ca(2+) is required as a cofactor. Post-translationally, ubiquitinated by PRKN during mitophagy, leading to its degradation and enhancement of mitophagy. Deubiquitinated by USP30.

It is found in the mitochondrion membrane. It catalyses the reaction [protein]-peptidylproline (omega=180) = [protein]-peptidylproline (omega=0). Functionally, constitutively inactive PPiase, which becomes active when bound to calmodulin and calcium. Seems to act as a chaperone for BCL2, targets it to the mitochondria and modulates its phosphorylation state. The BCL2/FKBP8/calmodulin/calcium complex probably interferes with the binding of BCL2 to its targets. The active form of FKBP8 may therefore play a role in the regulation of apoptosis. The polypeptide is Peptidyl-prolyl cis-trans isomerase FKBP8 (Fkbp8) (Rattus norvegicus (Rat)).